The sequence spans 237 residues: Orotidine 5'-phosphate decarboxylase (237 aa).

Substrate-binding positions include D11, K34, 61-70 (DLKLHDIPNT), T124, R186, Q195, G215, and R216. K63 functions as the Proton donor in the catalytic mechanism.

Belongs to the OMP decarboxylase family. Type 1 subfamily. As to quaternary structure, homodimer.

The enzyme catalyses orotidine 5'-phosphate + H(+) = UMP + CO2. It participates in pyrimidine metabolism; UMP biosynthesis via de novo pathway; UMP from orotate: step 2/2. Catalyzes the decarboxylation of orotidine 5'-monophosphate (OMP) to uridine 5'-monophosphate (UMP). In Lactococcus lactis subsp. cremoris (strain MG1363), this protein is Orotidine 5'-phosphate decarboxylase.